Here is a 340-residue protein sequence, read N- to C-terminus: MNDLDSLRQEAERLKNTIRDARKNALDTTLVQATAGMDPIGRIQMRTRRTLRGHLAKIYAMHWGSDSRNLVSASQDGKLIVWDSYTTNKVHAIPLRSSWVMTCAYAPSGSYVACGGLDNICSIYSLKTREGNVRVSRELPGHTGYLSCCRFVDDNQIVTSSGDMTCALWDIETGQQCTQFTGHTGDVMSLSLSPNMRTFTSGACDASAKLWDIRDGMCRQTFPGHESDINAVTFFPNGHAFATGSDDATCRLFDIRADQELAMYSHDNIICGITSVAFSKSGKLLLAGYDDFNCNVWDSMRTERAGVLAGHDNRVSCLGVTEDGMAVATGSWDSFLKIWN.

WD repeat units lie at residues 53-83, 95-125, 141-170, 182-212, 224-254, 268-298, and 310-340; these read GHLA…IVWD, LRSS…SIYS, GHTG…ALWD, GHTG…KLWD, GHES…RLFD, NIIC…NVWD, and GHDN…KIWN.

The protein belongs to the WD repeat G protein beta family. As to quaternary structure, g proteins are composed of 3 units, alpha, beta and gamma.

Its function is as follows. Guanine nucleotide-binding proteins (G proteins) are involved as a modulator or transducer in various transmembrane signaling systems. The beta and gamma chains are required for the GTPase activity, for replacement of GDP by GTP, and for G protein-effector interaction. In Homarus americanus (American lobster), this protein is Guanine nucleotide-binding protein G(I)/G(S)/G(T) subunit beta-1 (GBETA1).